Consider the following 360-residue polypeptide: Peptide chain release factor 1 (360 aa).

At Gln-237 the chain carries N5-methylglutamine.

The protein belongs to the prokaryotic/mitochondrial release factor family. Methylated by PrmC. Methylation increases the termination efficiency of RF1.

It localises to the cytoplasm. Peptide chain release factor 1 directs the termination of translation in response to the peptide chain termination codons UAG and UAA. This chain is Peptide chain release factor 1, found in Pseudomonas fluorescens (strain SBW25).